We begin with the raw amino-acid sequence, 287 residues long: MSAIDGLPPLRDVIRRHDLAARKSLGQNFLLDLNLTARIARAAGPLDDVTVVEIGPGPGGLTRALLATGARRVIAIERDERALGALEEIAAHYPGRLEIVCADAMDFDPTPLLGGERAKIVANLPYNIATPLLIGWLCTEPWPPWYDMMVLMFQREVAQRIVAREDDDAYGRLAVLSNWRCETNMLFDIAPSAFVPQPKVTSSVVRLAPRAAPEPCNRAALEQVAAAAFGQRRKMLRQSLKSLGVDPARLAAAAGIDPTRRAETVAVSGFVAMANELNNIRNTKTQT.

The S-adenosyl-L-methionine site is built by N28, L30, G55, E77, D103, and N123.

This sequence belongs to the class I-like SAM-binding methyltransferase superfamily. rRNA adenine N(6)-methyltransferase family. RsmA subfamily.

The protein localises to the cytoplasm. It carries out the reaction adenosine(1518)/adenosine(1519) in 16S rRNA + 4 S-adenosyl-L-methionine = N(6)-dimethyladenosine(1518)/N(6)-dimethyladenosine(1519) in 16S rRNA + 4 S-adenosyl-L-homocysteine + 4 H(+). In terms of biological role, specifically dimethylates two adjacent adenosines (A1518 and A1519) in the loop of a conserved hairpin near the 3'-end of 16S rRNA in the 30S particle. May play a critical role in biogenesis of 30S subunits. The sequence is that of Ribosomal RNA small subunit methyltransferase A from Rhodopseudomonas palustris (strain BisB5).